The primary structure comprises 119 residues: Large ribosomal subunit protein uL18 (119 aa).

The protein belongs to the universal ribosomal protein uL18 family. As to quaternary structure, part of the 50S ribosomal subunit; part of the 5S rRNA/L5/L18/L25 subcomplex. Contacts the 5S and 23S rRNAs.

This is one of the proteins that bind and probably mediate the attachment of the 5S RNA into the large ribosomal subunit, where it forms part of the central protuberance. The protein is Large ribosomal subunit protein uL18 of Clostridium botulinum (strain Okra / Type B1).